Here is a 372-residue protein sequence, read N- to C-terminus: NAD(P)H-quinone oxidoreductase subunit 1 (372 aa).

8 consecutive transmembrane segments (helical) span residues 27–47 (AIWM…GVLV), 97–117 (WLFT…FLIV), 128–148 (VGMG…GLLM), 166–186 (AAQS…IAMM), 204–224 (ILGW…IAAL), 249–269 (YSGM…ILSS), 308–328 (SLGI…AILL), and 351–371 (VGLV…FAFG).

This sequence belongs to the complex I subunit 1 family. As to quaternary structure, NDH-1 is composed of at least 11 different subunits.

Its subcellular location is the cellular thylakoid membrane. The catalysed reaction is a plastoquinone + NADH + (n+1) H(+)(in) = a plastoquinol + NAD(+) + n H(+)(out). It carries out the reaction a plastoquinone + NADPH + (n+1) H(+)(in) = a plastoquinol + NADP(+) + n H(+)(out). In terms of biological role, NDH-1 shuttles electrons from an unknown electron donor, via FMN and iron-sulfur (Fe-S) centers, to quinones in the respiratory and/or the photosynthetic chain. The immediate electron acceptor for the enzyme in this species is believed to be plastoquinone. Couples the redox reaction to proton translocation, and thus conserves the redox energy in a proton gradient. This Nostoc punctiforme (strain ATCC 29133 / PCC 73102) protein is NAD(P)H-quinone oxidoreductase subunit 1.